A 2131-amino-acid chain; its full sequence is Protein Ycf2 (2131 aa).

ATP is bound at residue 1466-1473 (GSIGTGRS).

Belongs to the Ycf2 family.

The protein resides in the plastid. Its subcellular location is the chloroplast stroma. Probable ATPase of unknown function. Its presence in a non-photosynthetic plant (Epifagus virginiana) and experiments in tobacco indicate that it has an essential function which is probably not related to photosynthesis. This Helianthus annuus (Common sunflower) protein is Protein Ycf2.